Here is a 644-residue protein sequence, read N- to C-terminus: Fructose-1,6-bisphosphatase class 3 (644 aa).

Belongs to the FBPase class 3 family. Requires Mn(2+) as cofactor.

The enzyme catalyses beta-D-fructose 1,6-bisphosphate + H2O = beta-D-fructose 6-phosphate + phosphate. The protein operates within carbohydrate biosynthesis; gluconeogenesis. The protein is Fructose-1,6-bisphosphatase class 3 of Oceanobacillus iheyensis (strain DSM 14371 / CIP 107618 / JCM 11309 / KCTC 3954 / HTE831).